A 375-amino-acid chain; its full sequence is Queuine tRNA-ribosyltransferase (375 aa).

Asp-89 acts as the Proton acceptor in catalysis. Substrate contacts are provided by residues Asp-89–Phe-93, Asp-143, Gln-187, and Gly-214. Residues Gly-245 to Asp-251 form an RNA binding region. Asp-264 (nucleophile) is an active-site residue. The tract at residues Thr-269 to Arg-273 is RNA binding; important for wobble base 34 recognition. Zn(2+) contacts are provided by Cys-302, Cys-304, Cys-307, and His-333.

Belongs to the queuine tRNA-ribosyltransferase family. As to quaternary structure, homodimer. Within each dimer, one monomer is responsible for RNA recognition and catalysis, while the other monomer binds to the replacement base PreQ1. Zn(2+) is required as a cofactor.

The enzyme catalyses 7-aminomethyl-7-carbaguanine + guanosine(34) in tRNA = 7-aminomethyl-7-carbaguanosine(34) in tRNA + guanine. It participates in tRNA modification; tRNA-queuosine biosynthesis. Catalyzes the base-exchange of a guanine (G) residue with the queuine precursor 7-aminomethyl-7-deazaguanine (PreQ1) at position 34 (anticodon wobble position) in tRNAs with GU(N) anticodons (tRNA-Asp, -Asn, -His and -Tyr). Catalysis occurs through a double-displacement mechanism. The nucleophile active site attacks the C1' of nucleotide 34 to detach the guanine base from the RNA, forming a covalent enzyme-RNA intermediate. The proton acceptor active site deprotonates the incoming PreQ1, allowing a nucleophilic attack on the C1' of the ribose to form the product. After dissociation, two additional enzymatic reactions on the tRNA convert PreQ1 to queuine (Q), resulting in the hypermodified nucleoside queuosine (7-(((4,5-cis-dihydroxy-2-cyclopenten-1-yl)amino)methyl)-7-deazaguanosine). This chain is Queuine tRNA-ribosyltransferase, found in Salmonella arizonae (strain ATCC BAA-731 / CDC346-86 / RSK2980).